Consider the following 729-residue polypeptide: Fatty acid oxidation complex subunit alpha (729 aa).

The interval 1–189 (MLYKGDTLYL…KIGLVDGVVK (189 aa)) is enoyl-CoA hydratase/isomerase. D296 is a substrate binding site. Residues 311–729 (ETPKQAAVLG…ARPVGDLKTA (419 aa)) form a 3-hydroxyacyl-CoA dehydrogenase region. NAD(+) contacts are provided by residues M324, D343, 400-402 (VVE), K407, and S429. H450 (for 3-hydroxyacyl-CoA dehydrogenase activity) is an active-site residue. N453 serves as a coordination point for NAD(+). Substrate-binding residues include N500 and Y660. The segment at 708–729 (RHNEPYYPPVEPARPVGDLKTA) is disordered.

This sequence in the N-terminal section; belongs to the enoyl-CoA hydratase/isomerase family. It in the C-terminal section; belongs to the 3-hydroxyacyl-CoA dehydrogenase family. As to quaternary structure, heterotetramer of two alpha chains (FadB) and two beta chains (FadA).

It catalyses the reaction a (3S)-3-hydroxyacyl-CoA + NAD(+) = a 3-oxoacyl-CoA + NADH + H(+). It carries out the reaction a (3S)-3-hydroxyacyl-CoA = a (2E)-enoyl-CoA + H2O. The enzyme catalyses a 4-saturated-(3S)-3-hydroxyacyl-CoA = a (3E)-enoyl-CoA + H2O. The catalysed reaction is (3S)-3-hydroxybutanoyl-CoA = (3R)-3-hydroxybutanoyl-CoA. It catalyses the reaction a (3Z)-enoyl-CoA = a 4-saturated (2E)-enoyl-CoA. It carries out the reaction a (3E)-enoyl-CoA = a 4-saturated (2E)-enoyl-CoA. It functions in the pathway lipid metabolism; fatty acid beta-oxidation. Involved in the aerobic and anaerobic degradation of long-chain fatty acids via beta-oxidation cycle. Catalyzes the formation of 3-oxoacyl-CoA from enoyl-CoA via L-3-hydroxyacyl-CoA. It can also use D-3-hydroxyacyl-CoA and cis-3-enoyl-CoA as substrate. The protein is Fatty acid oxidation complex subunit alpha of Escherichia coli O139:H28 (strain E24377A / ETEC).